We begin with the raw amino-acid sequence, 526 residues long: GMP synthase [glutamine-hydrolyzing] (526 aa).

The 200-residue stretch at 9–208 folds into the Glutamine amidotransferase type-1 domain; that stretch reads RILILDFGSQ…VMDICGCETL (200 aa). Cysteine 86 acts as the Nucleophile in catalysis. Catalysis depends on residues histidine 182 and glutamate 184. The GMPS ATP-PPase domain occupies 209–401; the sequence is WTSSSIIEDA…LGLPYEMLYR (193 aa). An ATP-binding site is contributed by 236 to 242; that stretch reads SGGVDSS.

Homodimer.

The enzyme catalyses XMP + L-glutamine + ATP + H2O = GMP + L-glutamate + AMP + diphosphate + 2 H(+). Its pathway is purine metabolism; GMP biosynthesis; GMP from XMP (L-Gln route): step 1/1. Catalyzes the synthesis of GMP from XMP. The polypeptide is GMP synthase [glutamine-hydrolyzing] (Psychromonas ingrahamii (strain DSM 17664 / CCUG 51855 / 37)).